We begin with the raw amino-acid sequence, 183 residues long: Hypoxanthine/guanine phosphoribosyltransferase (183 aa).

This sequence belongs to the purine/pyrimidine phosphoribosyltransferase family. Archaeal HPRT subfamily. As to quaternary structure, homodimer.

The protein localises to the cytoplasm. The catalysed reaction is IMP + diphosphate = hypoxanthine + 5-phospho-alpha-D-ribose 1-diphosphate. It catalyses the reaction GMP + diphosphate = guanine + 5-phospho-alpha-D-ribose 1-diphosphate. Its pathway is purine metabolism; IMP biosynthesis via salvage pathway; IMP from hypoxanthine: step 1/1. Its function is as follows. Catalyzes a salvage reaction resulting in the formation of IMP that is energically less costly than de novo synthesis. The protein is Hypoxanthine/guanine phosphoribosyltransferase of Methanothermococcus okinawensis (strain DSM 14208 / JCM 11175 / IH1).